Consider the following 874-residue polypeptide: Probable RNA-directed RNA polymerase (874 aa).

The protein belongs to the totiviridae RNA-directed RNA polymerase family.

It carries out the reaction RNA(n) + a ribonucleoside 5'-triphosphate = RNA(n+1) + diphosphate. In terms of biological role, RNA-dependent RNA polymerase which replicates the viral genome. Catalyzes the transcription of fully conservative plus-strand genomic RNAs that are extruded from the virion into the cytoplasm where they function as mRNAs for translation of viral proteins and also as substrates for encapsidation to form new virions. Once encapsidated, the positive strand is converted to dsRNA by the RNA-directed RNA polymerase. Displays ssRNA-binding activity. The sequence is that of Probable RNA-directed RNA polymerase (ORF3) from Leishmania major (LRV-1-1).